The following is a 145-amino-acid chain: Large ribosomal subunit protein uL13 (145 aa).

The protein belongs to the universal ribosomal protein uL13 family. In terms of assembly, part of the 50S ribosomal subunit.

In terms of biological role, this protein is one of the early assembly proteins of the 50S ribosomal subunit, although it is not seen to bind rRNA by itself. It is important during the early stages of 50S assembly. The chain is Large ribosomal subunit protein uL13 from Geobacillus kaustophilus (strain HTA426).